A 788-amino-acid polypeptide reads, in one-letter code: Ciliated left-right organizer metallopeptidase (788 aa).

Positions 1–20 (MLLLLLLLLLLPPLVLRVAA) are cleaved as a signal peptide. At 21–735 (SRCLHDETQK…DHNPSMTHLR (715 aa)) the chain is on the extracellular side. Residues 40–56 (SQLPSKSRSSSLTLPSS) show a composition bias toward low complexity. The interval 40-59 (SQLPSKSRSSSLTLPSSRDP) is disordered. His305 is a binding site for Zn(2+). Residue Glu306 is part of the active site. Zn(2+) is bound at residue His309. The N-linked (GlcNAc...) asparagine glycan is linked to Asn333. His385 contacts Zn(2+). 4 N-linked (GlcNAc...) asparagine glycosylation sites follow: Asn425, Asn491, Asn524, and Asn713. The chain crosses the membrane as a helical span at residues 736–756 (LSMGLCLMLLILVGVMGTTAY). Residues 757–788 (QKRATLPVRPSASYHSPELHSTRVPVRGIREV) lie on the Cytoplasmic side of the membrane. The disordered stretch occupies residues 767-788 (SASYHSPELHSTRVPVRGIREV).

It belongs to the peptidase M8 family. It depends on Zn(2+) as a cofactor.

The protein resides in the membrane. Its function is as follows. Putative metalloproteinase that plays a role in left-right patterning process. This Homo sapiens (Human) protein is Ciliated left-right organizer metallopeptidase.